Reading from the N-terminus, the 66-residue chain is Large ribosomal subunit protein bL35 (66 aa).

The segment covering 1–28 has biased composition (basic residues); it reads MPKMKTHRGSAKRFKRTGSGKLKRRHGF. A disordered region spans residues 1-50; sequence MPKMKTHRGSAKRFKRTGSGKLKRRHGFTSHMFANKSQKQKRKLRKSAMV.

This sequence belongs to the bacterial ribosomal protein bL35 family.

The protein is Large ribosomal subunit protein bL35 of Listeria monocytogenes serotype 4a (strain HCC23).